A 288-amino-acid chain; its full sequence is Quinate/shikimate dehydrogenase (288 aa).

Positions 71 and 107 each coordinate substrate. NAD(+) contacts are provided by residues 132 to 135 (AGGA), 155 to 158 (NRRD), K205, 232 to 235 (CVYN), and G255.

This sequence belongs to the shikimate dehydrogenase family. As to quaternary structure, homodimer.

The catalysed reaction is L-quinate + NAD(+) = 3-dehydroquinate + NADH + H(+). The enzyme catalyses L-quinate + NADP(+) = 3-dehydroquinate + NADPH + H(+). It carries out the reaction shikimate + NADP(+) = 3-dehydroshikimate + NADPH + H(+). It catalyses the reaction shikimate + NAD(+) = 3-dehydroshikimate + NADH + H(+). It functions in the pathway metabolic intermediate biosynthesis; chorismate biosynthesis; chorismate from D-erythrose 4-phosphate and phosphoenolpyruvate: step 4/7. Functionally, the actual biological function of YdiB remains unclear, nor is it known whether 3-dehydroshikimate or quinate represents the natural substrate. Catalyzes the reversible NAD-dependent reduction of both 3-dehydroshikimate (DHSA) and 3-dehydroquinate to yield shikimate (SA) and quinate, respectively. It can use both NAD or NADP for catalysis, however it has higher catalytic efficiency with NAD. The sequence is that of Quinate/shikimate dehydrogenase from Escherichia coli O157:H7.